A 213-amino-acid polypeptide reads, in one-letter code: MKWLEERFPGIGHVAKDVADHPVPSHTLNIFFCLGGLTLLCFIVQCLTGIFLAFYYKPTPEAAFTSVQMITNEVRFGSVIRSMHHWSCQLMILLVFLHMLRVYYTGAFKRPRELNWVAGCFLLVLSLALAFTGYLLPYEQLSYWASVIGAETANTLPVVGPTLKIMMQGGIKVTAEMLSRFYVLHVMILPAVAIIFLVAHFIMIRVQGISDPM.

Residues 30–50 (IFFCLGGLTLLCFIVQCLTGI) traverse the membrane as a helical segment. Cys-33 contributes to the heme c binding site. The heme b site is built by His-84 and His-98. Helical transmembrane passes span 88-108 (CQLM…TGAF), 114-134 (LNWV…FTGY), and 184-204 (LHVM…FIMI). Heme b is bound by residues His-185 and His-200.

It belongs to the cytochrome b family. PetB subfamily. The subunits of the cytochrome bc complex are a Rieske Fe-S protein (PetC), cytochrome b6 (PetB), subunit IV (PetD), and a diheme cytochrome c (PetX). Heme b serves as cofactor. The cofactor is heme c.

The protein resides in the cell membrane. Its function is as follows. Component of the cytochrome bc complex which donates electrons to the photosynthetic reaction center. The sequence is that of Cytochrome b6 from Heliomicrobium gestii (Heliobacterium gestii).